Consider the following 341-residue polypeptide: L-amino acid-D/L-Glu epimerase (341 aa).

Substrate is bound by residues Thr-132 and 157 to 159; that span reads KIK. Asp-186, Glu-212, and Asp-237 together coordinate Mg(2+). Substrate-binding positions include Lys-261 and 315 to 317; that span reads DLD.

The protein belongs to the mandelate racemase/muconate lactonizing enzyme family. The cofactor is Mg(2+).

In terms of biological role, catalyzes the epimerization of dipeptides with L-Glu in the second position. Has epimerase activity with L-Gly-L-Glu, L-Ala-L-Glu, L-Ser-L-Glu, L-Pro-L-Glu, L-Val-L-Glu, L-Met-L-Glu, L-Thr-L-Glu and L-Phe-L-Glu (in vitro). In Sulfurimonas denitrificans (strain ATCC 33889 / DSM 1251) (Thiomicrospira denitrificans (strain ATCC 33889 / DSM 1251)), this protein is L-amino acid-D/L-Glu epimerase.